The following is a 77-amino-acid chain: Delta/omega-plectoxin-Pt1a (77 aa).

An N-terminal signal peptide occupies residues 1 to 20 (MKHLIVAVVLLSALAICTSA). The propeptide occupies 21-34 (EEEQVNVPFRPEER). 5 cysteine pairs are disulfide-bonded: C38–C51, C45–C57, C50–C67, C54–C74, and C59–C65. S73 is lipidated: O-palmitoyl serine. C74 is subject to Cysteine amide.

Belongs to the neurotoxin 02 (plectoxin) family. 01 (Tx3) subfamily. In terms of tissue distribution, expressed by the venom gland.

The protein localises to the secreted. In terms of biological role, excitatory toxin that acts on both calcium and sodium (Nav) channels. It preferentially blocks a subset of calcium channels that is apparently not required for neurotransmitter release, it decreases threshold for sodium channel activation and it slows sodium channel inactivation. As it enhances synaptic transmission by prolonging presynaptic release of neurotransmitter, its effects on sodium and calcium channels may act synergistically to sustain the terminal excitability. This is Delta/omega-plectoxin-Pt1a from Plectreurys tristis (Spider).